The following is a 329-amino-acid chain: Cuticle collagen 6 (329 aa).

Triple-helical region regions lie at residues G142–D171, G189–P212, G216–L248, G253–S279, and G282–C320. The disordered stretch occupies residues P146–Y329. Positions D156 to E173 are enriched in basic and acidic residues. Over residues P187–P199 the composition is skewed to low complexity. The segment covering K200–P212 has biased composition (pro residues). The segment covering V251 to N272 has biased composition (pro residues). Residues P273 to G282 show a composition bias toward low complexity. Over residues C320–Y329 the composition is skewed to pro residues.

Belongs to the cuticular collagen family. Collagen polypeptide chains are complexed within the cuticle by disulfide bonds and other types of covalent cross-links.

Nematode cuticles are composed largely of collagen-like proteins. The cuticle functions both as an exoskeleton and as a barrier to protect the worm from its environment. This Caenorhabditis elegans protein is Cuticle collagen 6.